We begin with the raw amino-acid sequence, 85 residues long: Small ribosomal subunit protein uS17 (85 aa).

The protein belongs to the universal ribosomal protein uS17 family. As to quaternary structure, part of the 30S ribosomal subunit.

Its function is as follows. One of the primary rRNA binding proteins, it binds specifically to the 5'-end of 16S ribosomal RNA. The polypeptide is Small ribosomal subunit protein uS17 (Anaeromyxobacter sp. (strain Fw109-5)).